A 554-amino-acid polypeptide reads, in one-letter code: 3-(3-hydroxy-phenyl)propionate/3-hydroxycinnamic acid hydroxylase (554 aa).

FAD contacts are provided by residues 17-46 (QVAI…VVEK) and 285-295 (FRIDRVLLAGD).

It belongs to the PheA/TfdB FAD monooxygenase family. Requires FAD as cofactor.

The catalysed reaction is 3-(3-hydroxyphenyl)propanoate + NADH + O2 + H(+) = 3-(2,3-dihydroxyphenyl)propanoate + NAD(+) + H2O. It catalyses the reaction (2E)-3-(3-hydroxyphenyl)prop-2-enoate + NADH + O2 + H(+) = (2E)-3-(2,3-dihydroxyphenyl)prop-2-enoate + NAD(+) + H2O. Its pathway is aromatic compound metabolism; 3-phenylpropanoate degradation. Its function is as follows. Catalyzes the insertion of one atom of molecular oxygen into position 2 of the phenyl ring of 3-(3-hydroxyphenyl)propionate (3-HPP) and hydroxycinnamic acid (3HCI). The polypeptide is 3-(3-hydroxy-phenyl)propionate/3-hydroxycinnamic acid hydroxylase (Escherichia coli O81 (strain ED1a)).